Reading from the N-terminus, the 281-residue chain is MTSPSSRSVRPGSVVRTVRRHRGGRSATVQDMVAAEMPVAFIYNGVPFAVMMATPEDLEDFALGFSLSEGIVDHAQDLRVIAVETFLEGASLQIEIPPERAAALHQRRRNLDGRSGCGVCGNESIEAVLRVPPVLQSSLQIDVDALAHALDALHARQPIAAQTGAVHAAGWADAQGNVQLVREDVGRHNALDKVIGALARARIDASHGFAVVTSRASFEMAMKAAQARIPLLAAISAPTALAISLAESAGLTLIGFARDHDCVVYSHPQRLDLGVAVGEPA.

C117 acts as the Cysteine persulfide intermediate in catalysis.

Belongs to the FdhD family.

Its subcellular location is the cytoplasm. Functionally, required for formate dehydrogenase (FDH) activity. Acts as a sulfur carrier protein that transfers sulfur from IscS to the molybdenum cofactor prior to its insertion into FDH. The sequence is that of Sulfur carrier protein FdhD from Xanthomonas axonopodis pv. citri (strain 306).